Consider the following 444-residue polypeptide: MPMFQPSKNGGFDGHILDLHSAVKDGVLGGGDGKFLVVVTDEKKKLDLKEMISELELPEIPSVFICPISLEPMQDPVTLCTGQTYERSNILKWFNIGHCTCPTTMQELWDDLVTPNKTLHQLIYTWFSQKYVLMKKRSEDVQGRAIEILGTLRKAKGKAKVHALSELKQVVMAHAIAKKTVVDEGGVFVISSLLSPFTSHAVGSEAIAILVNLELDSDSKAGLMQPARVSLMVDMLNDGSIETKINCARLIGRLVEEKGFRAELVSSHSLLVGLMRLVKDRRRRNGVSPALTLLKSVSVHKQVRNLLVRIGAVPQLVDVLPCLDVECLESALFVLDSLCLESEGRIALKDSVNTIPHTVRLLMKVSEKCTNYAISILWSVCKLASEECSSLAVEVGLAAKLLLVIQSGCDPALKQRSAELLKLCSLHYSDSMFISKCKLTRTIQ.

Residues Glu59–Leu133 enclose the U-box domain. ARM repeat units follow at residues Lys301–Leu340 and Glu343–Lys382.

The enzyme catalyses S-ubiquitinyl-[E2 ubiquitin-conjugating enzyme]-L-cysteine + [acceptor protein]-L-lysine = [E2 ubiquitin-conjugating enzyme]-L-cysteine + N(6)-ubiquitinyl-[acceptor protein]-L-lysine.. Its pathway is protein modification; protein ubiquitination. In terms of biological role, functions as an E3 ubiquitin ligase. The chain is U-box domain-containing protein 31 (PUB31) from Arabidopsis thaliana (Mouse-ear cress).